Consider the following 400-residue polypeptide: Lysophospholipid transporter LplT (400 aa).

A run of 12 helical transmembrane segments spans residues 19–39 (VIVAQFLSAFGDNALLFATLA), 53–73 (VLQMVFVGAYILFAPFVGQIA), 91–111 (AGAAGICLGVNPFVGYTLVGI), 139–159 (LMEASTIAAILLGSVAGGVLA), 164–184 (IAALVACALAYAGAVAANLFI), 195–213 (SWRLSAMTRSFFCACVVLW), 227–247 (LFWGAGVTLRFLLVLWVPVAL), 257–277 (YLNAMVAVGIVVGAGAAAKLV), 281–301 (TVSRCMPAGILIGVVVAIFSL), 304–324 (ALLPAYALLLLIGMLGGFFVV), 352–372 (NSAMLLMLGLYSLAVLVGVPA), and 373–393 (VAIGIGFGVLFALAIAALWIW).

This sequence belongs to the major facilitator superfamily. LplT (TC 2.A.1.42) family.

It is found in the cell inner membrane. Functionally, catalyzes the facilitated diffusion of 2-acyl-glycero-3-phosphoethanolamine (2-acyl-GPE) into the cell. The sequence is that of Lysophospholipid transporter LplT from Salmonella typhi.